The following is a 324-amino-acid chain: Putative transcription factor sel-7 (324 aa).

Over residues 67–85 (SPPQTVISEAPPQSFTPSA) the composition is skewed to polar residues. The tract at residues 67–151 (SPPQTVISEA…DEKVLADGPF (85 aa)) is disordered. Low complexity predominate over residues 86–98 (TNSTSDKTSSSLK). A compositionally biased stretch (acidic residues) spans 106-123 (SDGDLDMEGEEDTEELFD). Positions 124 to 133 (NESQPSQRNQ) are enriched in polar residues. Residues 134-146 (SPKETEVEDEKVL) are compositionally biased toward basic and acidic residues.

As to quaternary structure, multimer. May interact with mediator complex subunit mdt-29. Widely expressed, including in pharyngeal muscle cells and body wall muscle cells.

It is found in the nucleus. Putative transcription factor. Positive regulator of the lin-12/Notch signaling pathway. Binds to specific DNA sequences in regulatory elements. Involved in cell fate decisions that require cell-cell interactions, such as the anchor cell (AC) / ventral uterine (VU) precursor cell fate decision. Heterochronic protein which controls the choice of stage specific cell fates, including the larval L3 stage-specific fate of seam cells. Involved in regulating the temporal expression pattern of hunchback-like protein hbl-1, thereby playing a role in the progression between larval stages L2 and L3. This chain is Putative transcription factor sel-7, found in Caenorhabditis elegans.